A 748-amino-acid chain; its full sequence is Meprin A subunit alpha (748 aa).

The first 20 residues, 1–20 (MLWTLPVCLLSLSFSAHIAA), serve as a signal peptide directing secretion. Positions 21–66 (VSIQHLSTGHDHDDVDVGEQQKDISEINSAAGLNLFQGDILLPRTR) are excised as a propeptide. Residues 67–261 (NALRDPSSRW…TRLNRMYNCT (195 aa)) enclose the Peptidase M12A domain. Topologically, residues 67–719 (NALRDPSSRW…RCQAMHVHGS (653 aa)) are extracellular. Disulfide bonds link cysteine 108–cysteine 260, cysteine 129–cysteine 148, and cysteine 270–cysteine 432. Asparagine 141 is a glycosylation site (N-linked (GlcNAc...) asparagine). A Zn(2+)-binding site is contributed by histidine 156. The active site involves glutamate 157. Histidine 160 and histidine 166 together coordinate Zn(2+). N-linked (GlcNAc...) asparagine glycans are attached at residues asparagine 223, asparagine 259, asparagine 319, asparagine 441, and asparagine 542. An MAM domain is found at 265-434 (TLLDHCAFEK…ITLTETPCPT (170 aa)). The MATH domain maps to 435 to 596 (GVWTIRNISQ…DDTLIIFVDF (162 aa)). Residues 641–668 (LPRRLDQRQPSRPKRSVENTGPMEDHNW) are disordered. One can recognise an EGF-like domain in the interval 672 to 712 (FRDPCDPNPCQNEGTCVNVKGMASCRCVSGHAFFYTGERCQ). Intrachain disulfides connect cysteine 676–cysteine 687, cysteine 681–cysteine 696, and cysteine 698–cysteine 711. Residues 720–739 (LLGLLIGCITALIFLTFITF) traverse the membrane as a helical segment. Residues 740-748 (SNTYQKLRQ) lie on the Cytoplasmic side of the membrane.

As to quaternary structure, homotetramer consisting of disulfide-linked alpha subunits, homooligomer consisting of disulfide-linked alpha subunit homodimers, or heterotetramer of two alpha and two beta subunits formed by non-covalent association of two disulfide-linked heterodimers. Interacts with MBL2 through its carbohydrate moiety. This interaction may inhibit its catalytic activity. It depends on Zn(2+) as a cofactor. Post-translationally, N-glycosylated; contains GlcNAc, galactose, mannose and a small amount of fucose. In terms of tissue distribution, colocalized with E-24.11 in proximal tubules of juxtamedullary nephrons.

The protein localises to the membrane. The enzyme catalyses Hydrolysis of protein and peptide substrates preferentially on carboxyl side of hydrophobic residues.. Inhibited by actinonin. This chain is Meprin A subunit alpha (Mep1a), found in Rattus norvegicus (Rat).